A 306-amino-acid polypeptide reads, in one-letter code: Acetyl-coenzyme A carboxylase carboxyl transferase subunit beta (306 aa).

One can recognise a CoA carboxyltransferase N-terminal domain in the interval 25 to 294 (LWIKDPTSGE…AVNPSNPSPT (270 aa)). The interval 286–306 (VNPSNPSPTDSQPPLSKAEAA) is disordered. A compositionally biased stretch (polar residues) spans 287 to 299 (NPSNPSPTDSQPP).

The protein belongs to the AccD/PCCB family. In terms of assembly, acetyl-CoA carboxylase is a heterohexamer composed of biotin carboxyl carrier protein (AccB), biotin carboxylase (AccC) and two subunits each of ACCase subunit alpha (AccA) and ACCase subunit beta (AccD).

The protein localises to the cytoplasm. The catalysed reaction is N(6)-carboxybiotinyl-L-lysyl-[protein] + acetyl-CoA = N(6)-biotinyl-L-lysyl-[protein] + malonyl-CoA. It participates in lipid metabolism; malonyl-CoA biosynthesis; malonyl-CoA from acetyl-CoA: step 1/1. Its function is as follows. Component of the acetyl coenzyme A carboxylase (ACC) complex. Biotin carboxylase (BC) catalyzes the carboxylation of biotin on its carrier protein (BCCP) and then the CO(2) group is transferred by the transcarboxylase to acetyl-CoA to form malonyl-CoA. The sequence is that of Acetyl-coenzyme A carboxylase carboxyl transferase subunit beta from Bartonella quintana (strain Toulouse) (Rochalimaea quintana).